The following is a 151-amino-acid chain: Protein Turandot Z (151 aa).

The signal sequence occupies residues 1-23 (MSRLIHLSFVLALLACLTGTISA).

The protein belongs to the Turandot family.

The protein resides in the secreted. A humoral factor that may play a role in stress tolerance. This chain is Protein Turandot Z, found in Drosophila persimilis (Fruit fly).